We begin with the raw amino-acid sequence, 657 residues long: MLYPQDFDVIVVGGGHAGTEAALAAARMGSRTLLLTHNIETLGQMSCNPSIGGIGKGHLVKEVDALGGAMALATDEAGIQFRILNSSKGPAVRATRAQADRILYKAAIRRMLENQPNLWLFQQAVDDLMVEGDRVVGAVTQVGIRFRSRAVVLTAGTFLDGKIHVGLNNYAAGRAGDPPAVSLSARLKELQLPQGRLKTGTPPRIDGRSIDFSQCEEQPGDGMPGGVNEGAVPVFSFMGNAAMHPRQVPCWITHTNARTHEIIRSGFDRSPMFTGKIEGVGPRYCPSVEDKINRFADKESHQIFLEPEGLTTHEFYPNGISTSLPFDIQYDLVRSMRGLENAHILRPGYAIEYDYFDPRSLKSSFETRQIQGLFFAGQINGTTGYEEAAAQGLFAGINAALQCRGERAWVPARDEAYLGVLVDDLITKGVTEPYRMFTSRAEFRLQLREDNADMRLTDAGRRMGLVDDARWDAFSRKRDAVSRETERLKSTWVNPRNLPTVEAERVLGKAIEHEYNLFDLLRRPDVGYDALTTMDGGKYASEAVSRETLGELSAPVIEQVEIAAKYAGYIERQRDEVQRAAHFEKLRLPEDLDYMQVAALSIEVRQKLQKHRPETLGQASRISGVTPAAISLLMVHLKKGGFKGFAPQPADGVETVA.

Position 13-18 (13-18 (GGGHAG)) interacts with FAD. 281–295 (GPRYCPSVEDKINRF) serves as a coordination point for NAD(+).

It belongs to the MnmG family. In terms of assembly, homodimer. Heterotetramer of two MnmE and two MnmG subunits. The cofactor is FAD.

The protein localises to the cytoplasm. In terms of biological role, NAD-binding protein involved in the addition of a carboxymethylaminomethyl (cmnm) group at the wobble position (U34) of certain tRNAs, forming tRNA-cmnm(5)s(2)U34. This chain is tRNA uridine 5-carboxymethylaminomethyl modification enzyme MnmG, found in Acidovorax ebreus (strain TPSY) (Diaphorobacter sp. (strain TPSY)).